We begin with the raw amino-acid sequence, 69 residues long: Protein hunchback (69 aa).

3 C2H2-type zinc fingers span residues 1–11 (KHHLEYHLRNH), 17–39 (FKCE…LKSH), and 45–69 (YRCA…KYSH).

The protein belongs to the hunchback C2H2-type zinc-finger protein family.

It is found in the nucleus. Its function is as follows. Gap class segmentation protein that controls development of head structures. The polypeptide is Protein hunchback (hb) (Apis mellifera (Honeybee)).